The following is a 383-amino-acid chain: TnpB-like protein ORF383B (383 aa).

The Zn(2+) site is built by C328, C331, C345, and C348.

In the N-terminal section; belongs to the transposase 2 family. It in the C-terminal section; belongs to the transposase 35 family.

The chain is TnpB-like protein ORF383B from Acidianus convivator (ATV).